The primary structure comprises 461 residues: Bifunctional protein GlmU (461 aa).

Residues 1 to 232 (MNLQIIILAA…SFEVQGINNR (232 aa)) are pyrophosphorylase. UDP-N-acetyl-alpha-D-glucosamine contacts are provided by residues 8–11 (LAAG), K22, Q73, and 78–79 (GT). Mg(2+) is bound at residue D102. Residues G142, E157, and N230 each coordinate UDP-N-acetyl-alpha-D-glucosamine. N230 serves as a coordination point for Mg(2+). The segment at 233-253 (QQLQQLERIWQQRAANQLMEK) is linker. Residues 254–461 (GATLADANRF…WKRPVKRERD (208 aa)) form an N-acetyltransferase region. UDP-N-acetyl-alpha-D-glucosamine-binding residues include R336 and K354. H366 acts as the Proton acceptor in catalysis. UDP-N-acetyl-alpha-D-glucosamine is bound by residues Y369 and N380. Acetyl-CoA contacts are provided by residues A383, 389–390 (NY), S408, and A426.

In the N-terminal section; belongs to the N-acetylglucosamine-1-phosphate uridyltransferase family. This sequence in the C-terminal section; belongs to the transferase hexapeptide repeat family. As to quaternary structure, homotrimer. Mg(2+) is required as a cofactor.

It is found in the cytoplasm. The enzyme catalyses alpha-D-glucosamine 1-phosphate + acetyl-CoA = N-acetyl-alpha-D-glucosamine 1-phosphate + CoA + H(+). It carries out the reaction N-acetyl-alpha-D-glucosamine 1-phosphate + UTP + H(+) = UDP-N-acetyl-alpha-D-glucosamine + diphosphate. It participates in nucleotide-sugar biosynthesis; UDP-N-acetyl-alpha-D-glucosamine biosynthesis; N-acetyl-alpha-D-glucosamine 1-phosphate from alpha-D-glucosamine 6-phosphate (route II): step 2/2. Its pathway is nucleotide-sugar biosynthesis; UDP-N-acetyl-alpha-D-glucosamine biosynthesis; UDP-N-acetyl-alpha-D-glucosamine from N-acetyl-alpha-D-glucosamine 1-phosphate: step 1/1. The protein operates within bacterial outer membrane biogenesis; LPS lipid A biosynthesis. Functionally, catalyzes the last two sequential reactions in the de novo biosynthetic pathway for UDP-N-acetylglucosamine (UDP-GlcNAc). The C-terminal domain catalyzes the transfer of acetyl group from acetyl coenzyme A to glucosamine-1-phosphate (GlcN-1-P) to produce N-acetylglucosamine-1-phosphate (GlcNAc-1-P), which is converted into UDP-GlcNAc by the transfer of uridine 5-monophosphate (from uridine 5-triphosphate), a reaction catalyzed by the N-terminal domain. The polypeptide is Bifunctional protein GlmU (Legionella pneumophila (strain Corby)).